Consider the following 168-residue polypeptide: Disulfide bond formation protein B 2 (168 aa).

Over 1–14 the chain is Cytoplasmic; the sequence is MSAPIGATRAERWT. The helical transmembrane segment at 15 to 31 threads the bilayer; it reads LLAIGVASFELVAGALW. The Periplasmic portion of the chain corresponds to 32–49; it reads IQLAWQEDPCPLCIIQRY. A disulfide bridge connects residues Cys41 and Cys44. The chain crosses the membrane as a helical span at residues 50–64; that stretch reads LFLLIALFTFVAAAG. Topologically, residues 65-69 are cytoplasmic; that stretch reads GRRVA. A helical membrane pass occupies residues 70 to 87; the sequence is LLRVLSLTTALAGAAVAV. Topologically, residues 88–142 are periplasmic; that stretch reads RHIYVQAHPGFSCGFDALQPVIDSLPPAHWLPPVFKVGGLCETLYPPILGLSLPM. Residues Cys100 and Cys128 are joined by a disulfide bond. A helical membrane pass occupies residues 143-161; that stretch reads WALVGFSAIAVALGWRIRA. Residues 162-168 lie on the Cytoplasmic side of the membrane; it reads QAVIRTA.

The protein belongs to the DsbB family.

It localises to the cell inner membrane. Required for disulfide bond formation in some periplasmic proteins. Acts by oxidizing the DsbA protein. This Burkholderia lata (strain ATCC 17760 / DSM 23089 / LMG 22485 / NCIMB 9086 / R18194 / 383) protein is Disulfide bond formation protein B 2.